Here is a 169-residue protein sequence, read N- to C-terminus: MEFEKALSILKNLCSENVVEHCLAVSEYAYELALAIKNKGYEVDVELVRLGGLLHDIGRSRTHGIEHGVVGAEILRELGFDEKLALIAERHIGAGITKEEAIELGLPPKDYLPITLEEKIVAHADNLIFGTKRVEIDDVIKKFEKRLGKNHPSIKRIILLNDEINNLLK.

The 113-residue stretch at 18 to 130 folds into the HD domain; that stretch reads VVEHCLAVSE…VAHADNLIFG (113 aa).

This is an uncharacterized protein from Methanocaldococcus jannaschii (strain ATCC 43067 / DSM 2661 / JAL-1 / JCM 10045 / NBRC 100440) (Methanococcus jannaschii).